A 419-amino-acid polypeptide reads, in one-letter code: Effector protein BipC (419 aa).

2 disordered regions span residues 62 to 91 (VAGS…TVSG) and 338 to 402 (LQSG…AKSQ). Composition is skewed to basic and acidic residues over residues 71–91 (ELAR…TVSG) and 380–392 (TRDE…REAA).

It belongs to the SctB/SipC family.

It localises to the secreted. The chain is Effector protein BipC (bipC) from Burkholderia mallei (strain NCTC 10247).